The chain runs to 509 residues: Zinc finger protein Aiolos (509 aa).

The segment at 1-85 (MEDIKPNVEL…PMGNAEEPEI (85 aa)) is disordered. The span at 10 to 20 (LKSTQEQSVPT) shows a compositional bias: polar residues. Position 20 is a phosphothreonine (threonine 20). Residues 56–72 (DSMKVKDEYSERDENVL) show a composition bias toward basic and acidic residues. Residues lysine 61, lysine 73, and lysine 100 each participate in a glycyl lysine isopeptide (Lys-Gly) (interchain with G-Cter in SUMO2) cross-link. C2H2-type zinc fingers lie at residues 118–140 (MNCDVCGLSCISFNVLMVHKRSH), 146–168 (FQCNQCGASFTQKGNLLRHIKLH), and 174–196 (FKCHLCNYACQRRDALTGHLRTH). The C2H2-type 4; atypical zinc-finger motif lies at 202–224 (YKCEFCGRSYKQRSSLEEHKERC). Lysine 245 participates in a covalent cross-link: Glycyl lysine isopeptide (Lys-Gly) (interchain with G-Cter in SUMO2). Threonine 326 is modified (phosphothreonine). The tract at residues 365-421 (HLPEKSLPSERGLSPTNSGHDSTDTDSNHEERQNHIYQQNPMVPPRARNGMPLLKEG) is disordered. Residue serine 378 is modified to Phosphoserine. Residues 385 to 398 (DSTDTDSNHEERQN) are compositionally biased toward basic and acidic residues. Residues 452-474 (YRCDHCRVLFLDYVMFTIHMGCH) form a C2H2-type 5 zinc finger. The interval 452–504 (YRCDHCRVLFLDYVMFTIHMGCHGFRDPFECNMCGYRSHDRYEFSSHIARGEH) is mediates homodimerization and heterodimerization. Residues 480–504 (FECNMCGYRSHDRYEFSSHIARGEH) form a C2H2-type 6; atypical zinc finger.

The protein belongs to the Ikaros C2H2-type zinc-finger protein family. Homodimer. Heterodimer with other IKAROS family members. Interacts with IKZF4 and IKZF5. Interacts with IKZF1. Interacts with HRAS. Interacts with FOXP3; this interaction may be required for silencing target genes and regulating the suppressive activity of FOXP3-positive regulatory T-cells (Treg). Interacts with BCL21L; this interaction blocks the anti-apoptotic role of BCL21L. Associates with histone deacetylase complexes containing HDAC1, MTA2 and SIN3A.

It is found in the nucleus. Its subcellular location is the cytoplasm. Its function is as follows. Transcription factor that plays an important role in the regulation of lymphocyte differentiation. Plays an essential role in regulation of B-cell differentiation, proliferation and maturation to an effector state. Involved in regulating BCL2 expression and controlling apoptosis in T-cells in an IL2-dependent manner. This Bos taurus (Bovine) protein is Zinc finger protein Aiolos (IKZF3).